We begin with the raw amino-acid sequence, 339 residues long: Alcohol dehydrogenase (339 aa).

Residues C38, H61, C92, C95, C98, C106, and C148 each coordinate Zn(2+). NAD(+) is bound by residues 172-177 (GIGGLG), D195, K200, 260-262 (VGL), and R331.

This sequence belongs to the zinc-containing alcohol dehydrogenase family. Requires Zn(2+) as cofactor.

It carries out the reaction a primary alcohol + NAD(+) = an aldehyde + NADH + H(+). The catalysed reaction is a secondary alcohol + NAD(+) = a ketone + NADH + H(+). With respect to regulation, the rate-limiting step is NADH release. Catabolite repression. In terms of biological role, active with primary alcohols, including methanol. This chain is Alcohol dehydrogenase (adh), found in Geobacillus stearothermophilus (Bacillus stearothermophilus).